The primary structure comprises 428 residues: Elongation factor 1-alpha (428 aa).

A tr-type G domain is found at 5-217; the sequence is KPHVNIVFIG…DQIPEPEKPT (213 aa). A G1 region spans residues 14 to 21; sequence GHVDHGKS. 14–21 contacts GTP; it reads GHVDHGKS. Residue Ser-21 participates in Mg(2+) binding. A G2 region spans residues 68 to 72; sequence GITID. The tract at residues 89 to 92 is G3; it reads DAPG. GTP is bound by residues 89–93 and 144–147; these read DAPGH and NKMD. The G4 stretch occupies residues 144 to 147; the sequence is NKMD. The interval 181–183 is G5; sequence SAW.

The protein belongs to the TRAFAC class translation factor GTPase superfamily. Classic translation factor GTPase family. EF-Tu/EF-1A subfamily.

The protein localises to the cytoplasm. The catalysed reaction is GTP + H2O = GDP + phosphate + H(+). Its function is as follows. GTP hydrolase that promotes the GTP-dependent binding of aminoacyl-tRNA to the A-site of ribosomes during protein biosynthesis. The polypeptide is Elongation factor 1-alpha (Thermococcus sibiricus (strain DSM 12597 / MM 739)).